A 396-amino-acid chain; its full sequence is MTSAVYLQAGRDKSLKRKHPWLFSKAIKKIKGKPGLGDTVTIHDSEGKFLATAAYSPHSQIRARVWSFDEKEVIDQHFFERRLRRALEARSQVIEEGGLTGFRLCAAESDFLPGVTIDKFDNVLVCQLLSAGAERHKGEIVGALMAIFPGMSIYERSDVEVRTKEGLEPIKGALWGNEPTAPVLIAENGFKIEVDIIDGHKTGFYLDQRDSRAALERFSKDKTVLNCFSYTGTFSLYALRGGCKHVTNVDVSQPALDTAKRNVEHNNLDLDKVDFVKQDVFKLLRQYREDGVLFDTIVMDPPKFADNKAQLTGACRGYKDINMIAMQILKPGGTLLTFSCSGLMEQNLFQKVVADAALDAGKDLLIMERLNQAADHPIAGSYPEGFYLKGLICKVY.

One can recognise a PUA domain in the interval 2-79 (TSAVYLQAGR…EKEVIDQHFF (78 aa)).

Belongs to the methyltransferase superfamily. RlmI family.

The protein localises to the cytoplasm. The enzyme catalyses cytidine(1962) in 23S rRNA + S-adenosyl-L-methionine = 5-methylcytidine(1962) in 23S rRNA + S-adenosyl-L-homocysteine + H(+). In terms of biological role, specifically methylates the cytosine at position 1962 (m5C1962) of 23S rRNA. This is Ribosomal RNA large subunit methyltransferase I from Pseudoalteromonas translucida (strain TAC 125).